The sequence spans 311 residues: MDTEMDTCITVWHWPTHERWYDEGIRHSLDLIREAGFTHINWNPDSGSSYMLADAEIEFTRRIVAEAGLQTHSVHASNGVNPVSELAHAGPVPFAQETRKNFLSHHDWQRQSGVELLKNRIDLAAALGAPNVVLHVDITDDTFRSVENENLLFEPLFRSFDDVEAHCIERNVQIAVETLVKANAENYLKLYARLFSRYSSDFVGVCYDSGHWELIEPGKLSVLERHGDRLIATHIHDNFGAKDDHLLPFDGRLDWDAITKAIAATNYRTPLNFETPMDRYVLSESSYYQRAHAIALRLEEMVASARDRAAN.

This is an uncharacterized protein from Sinorhizobium fredii (strain NBRC 101917 / NGR234).